Consider the following 197-residue polypeptide: Phosphoheptose isomerase (197 aa).

Positions 34-196 (MVQCLLGGNK…DRTLFPQDEQ (163 aa)) constitute an SIS domain. Residue 49-51 (NGG) coordinates substrate. Positions 58 and 62 each coordinate Zn(2+). Residues Glu-62, 91–92 (ND), 117–119 (STS), Ser-122, and Gln-172 contribute to the substrate site. Residues Gln-172 and His-180 each coordinate Zn(2+).

The protein belongs to the SIS family. GmhA subfamily. Homotetramer. Zn(2+) is required as a cofactor.

It localises to the cytoplasm. The enzyme catalyses 2 D-sedoheptulose 7-phosphate = D-glycero-alpha-D-manno-heptose 7-phosphate + D-glycero-beta-D-manno-heptose 7-phosphate. It functions in the pathway carbohydrate biosynthesis; D-glycero-D-manno-heptose 7-phosphate biosynthesis; D-glycero-alpha-D-manno-heptose 7-phosphate and D-glycero-beta-D-manno-heptose 7-phosphate from sedoheptulose 7-phosphate: step 1/1. Functionally, catalyzes the isomerization of sedoheptulose 7-phosphate in D-glycero-D-manno-heptose 7-phosphate. The chain is Phosphoheptose isomerase from Shewanella oneidensis (strain ATCC 700550 / JCM 31522 / CIP 106686 / LMG 19005 / NCIMB 14063 / MR-1).